The primary structure comprises 199 residues: Pneumococcal vaccine antigen A homolog (199 aa).

The protein localises to the cell surface. In Streptococcus pyogenes serotype M1, this protein is Pneumococcal vaccine antigen A homolog (pvaA).